Reading from the N-terminus, the 45-residue chain is Large ribosomal subunit protein bL36 (45 aa).

The interval 1 to 45 is disordered; it reads MKVSSSIKADPSKGDKLVRRKGRLYVINKKDPNRKQRQAGPARKK.

It belongs to the bacterial ribosomal protein bL36 family.

This is Large ribosomal subunit protein bL36 from Chlamydia caviae (strain ATCC VR-813 / DSM 19441 / 03DC25 / GPIC) (Chlamydophila caviae).